The chain runs to 438 residues: Protein kinase PINOID (438 aa).

The segment at 1–24 is disordered; the sequence is MLRESDGEMSLGTTNSPISSGTES. Residues 11-24 are compositionally biased toward polar residues; that stretch reads LGTTNSPISSGTES. One can recognise a Protein kinase domain in the interval 75 to 394; the sequence is FRLMRRIGAG…AAEVKVHPFF (320 aa). ATP-binding positions include 81-89 and Lys-109; that span reads IGAGDIGTV. The active-site Proton acceptor is the Asp-205. Residues 395-438 form the AGC-kinase C-terminal domain; the sequence is KGLNFALIRTLTPPEIPSSVVKKPMKSATFSGRSSNKPAAFDYF.

It belongs to the protein kinase superfamily. Ser/Thr protein kinase family. As to quaternary structure, interacts with PDK1, CML12 and PBP1. Component of a complex made of PINs (e.g. PIN1 and PIN2), MAB4/MELs (e.g. NPY1/MAB4 and NPY5/MEL1) and AGC kinases (e.g. D6PK and PID) at the plasma membrane. Binds directly to PIN2, NPY1/MAB4 and NPY5/MEL1. In terms of processing, autophosphorylated. Phosphorylated by PDK1. Expressed in root hair cells, shoot xylem parenchyma cells and endodermis around the vasculature. Expressed in anther primordia, vasculature of the growing flower stalk, young pedicels and bracts and developing sepals, but not in petals. In pistils, transiently expressed in the vasculature of the style and the septum, and in the integuments and funiculus of the developing ovule.

The protein localises to the cytoplasm. It is found in the cytosol. Its subcellular location is the cell membrane. It carries out the reaction L-seryl-[protein] + ATP = O-phospho-L-seryl-[protein] + ADP + H(+). The catalysed reaction is L-threonyl-[protein] + ATP = O-phospho-L-threonyl-[protein] + ADP + H(+). Its activity is regulated as follows. Activated by magnesium and PDK1. Inhibited by staurosporine. Repressed by calcium. Serine/threonine-protein kinase involved in the regulation of auxin signaling. Acts as a positive regulator of cellular auxin efflux and regulates organ development by enhancing polar auxin transport. Phosphorylates conserved serine residues in the PIN auxin efflux carriers. Phosphorylation of PIN proteins is required and sufficient for apical-basal PIN polarity that enables directional intercellular auxin fluxes, which mediate differential growth, tissue patterning and organogenesis. Phosphorylates PIN proteins (e.g. PIN1 and PIN2), especially when NPY proteins (e.g. NPY1/MAB4 and NPY5/MEL1) are recruited at the plasma membrane; this enhances the polarized localizations (apical or basal) of PINs in the cell by limiting their lateral diffusion-based escape. Acts in association with PIN1 to control the establishment of bilateral symmetry and promotion of cotyledon outgrowth. Regulates root gravitropism through modulation of PIN2-dependent basipetal auxin transport. Required for polarization of PIN3-dependent auxin transport for hypocotyl gravitropic response. The protein kinase activity of PID is essential for its auxin efflux regulatory function. PID kinase and PP2A phosphatase activities antagonistically regulate phosphorylation of PIN proteins, affecting PIN sorting. The protein is Protein kinase PINOID of Arabidopsis thaliana (Mouse-ear cress).